The chain runs to 217 residues: 3,4-dihydroxy-2-butanone 4-phosphate synthase (217 aa).

D-ribulose 5-phosphate is bound by residues 40–41 (RE), aspartate 45, 153–157 (RRGHT), and glutamate 177. Mg(2+) is bound at residue glutamate 41. Position 156 (histidine 156) interacts with Mg(2+).

It belongs to the DHBP synthase family. In terms of assembly, homodimer. Mg(2+) is required as a cofactor. The cofactor is Mn(2+).

It catalyses the reaction D-ribulose 5-phosphate = (2S)-2-hydroxy-3-oxobutyl phosphate + formate + H(+). It functions in the pathway cofactor biosynthesis; riboflavin biosynthesis; 2-hydroxy-3-oxobutyl phosphate from D-ribulose 5-phosphate: step 1/1. In terms of biological role, catalyzes the conversion of D-ribulose 5-phosphate to formate and 3,4-dihydroxy-2-butanone 4-phosphate. The sequence is that of 3,4-dihydroxy-2-butanone 4-phosphate synthase from Aliivibrio fischeri (Vibrio fischeri).